A 242-amino-acid chain; its full sequence is Cysteine desulfuration protein SufE (242 aa).

Residue Cys148 is the Cysteine persulfide intermediate of the active site.

Belongs to the SufE family. In terms of assembly, monomer. Interacts with SufS; interaction enhances cysteine desulfurase activity of SufS.

The protein resides in the plastid. The protein localises to the apicoplast. It participates in cofactor biosynthesis; iron-sulfur cluster biosynthesis. Participates in sulfur mobilization (SUF) pathway for iron-sulfur (Fe-S) cluster biogenesis. Enhances cysteine desulfurase activity of SufS. Probably functions as a sulfur acceptor for SufS. The chain is Cysteine desulfuration protein SufE from Plasmodium vivax.